Reading from the N-terminus, the 580-residue chain is Protein O-linked-mannose beta-1,4-N-acetylglucosaminyltransferase 2 (580 aa).

The Cytoplasmic segment spans residues 1-4 (MHLS). Residues 5–25 (AVFNALLVSVLAAVLWKHVRL) traverse the membrane as a helical; Signal-anchor for type II membrane protein segment. Residues 26–580 (REHAATLEEE…PFADVLVCNT (555 aa)) are Lumenal-facing. Residues N99 and N276 are each glycosylated (N-linked (GlcNAc...) asparagine). The Fibronectin type-III domain occupies 488–580 (ARCQASVHGA…PFADVLVCNT (93 aa)).

It belongs to the glycosyltransferase 61 family.

It localises to the endoplasmic reticulum membrane. It catalyses the reaction 3-O-(alpha-D-mannosyl)-L-threonyl-[protein] + UDP-N-acetyl-alpha-D-glucosamine = 3-O-(N-acetyl-beta-D-glucosaminyl-(1-&gt;4)-alpha-D-mannosyl)-L-threonyl-[protein] + UDP + H(+). It functions in the pathway protein modification; protein glycosylation. In terms of biological role, O-linked mannose beta-1,4-N-acetylglucosaminyltransferase that transfers UDP-N-acetyl-D-glucosamine to the 4-position of the mannose to generate N-acetyl-D-glucosamine-beta-1,4-O-D-mannosylprotein. Involved in the biosynthesis of the phosphorylated O-mannosyl trisaccharide (N-acetylgalactosamine-beta-3-N-acetylglucosamine-beta-4-(phosphate-6-)mannose), a carbohydrate structure present in alpha-dystroglycan (DAG1), which is required for binding laminin G-like domain-containing extracellular proteins with high affinity. This chain is Protein O-linked-mannose beta-1,4-N-acetylglucosaminyltransferase 2 (POMGNT2), found in Pan troglodytes (Chimpanzee).